An 818-amino-acid polypeptide reads, in one-letter code: Response regulator SSK1 (818 aa).

In terms of domain architecture, Response regulatory spans 611 to 769; sequence NVLIVEDNPI…WLERKVMEWG (159 aa). Asp660 is modified (4-aspartylphosphate).

It belongs to the SSK1 family.

Its subcellular location is the cytoplasm. Functionally, two-domain response regulator protein in the two-component signal transduction system of the HOG1 pathway. Modulates stress response, melanin biosynthesis and virulence via its regulation of the phosphorylation of HOG1. This is Response regulator SSK1 from Verticillium dahliae (strain VdLs.17 / ATCC MYA-4575 / FGSC 10137) (Verticillium wilt).